Reading from the N-terminus, the 301-residue chain is ATP synthase gamma chain (301 aa).

The protein belongs to the ATPase gamma chain family. F-type ATPases have 2 components, CF(1) - the catalytic core - and CF(0) - the membrane proton channel. CF(1) has five subunits: alpha(3), beta(3), gamma(1), delta(1), epsilon(1). CF(0) has three main subunits: a, b and c.

The protein resides in the cell inner membrane. Functionally, produces ATP from ADP in the presence of a proton gradient across the membrane. The gamma chain is believed to be important in regulating ATPase activity and the flow of protons through the CF(0) complex. In Helicobacter pylori (strain J99 / ATCC 700824) (Campylobacter pylori J99), this protein is ATP synthase gamma chain.